The chain runs to 716 residues: Translation initiation factor IF-2 (716 aa).

A disordered region spans residues Y50–K136. Residues P62–N84 are compositionally biased toward polar residues. Positions K101–R113 are enriched in basic residues. Positions N114 to P126 are enriched in low complexity. Residues I217 to K386 form the tr-type G domain. The tract at residues G226–T233 is G1. G226 to T233 contacts GTP. The segment at G251–H255 is G2. The segment at D272–G275 is G3. GTP is bound by residues D272–H276 and N326–D329. A G4 region spans residues N326–D329. Residues S362–L364 form a G5 region.

The protein belongs to the TRAFAC class translation factor GTPase superfamily. Classic translation factor GTPase family. IF-2 subfamily.

The protein localises to the cytoplasm. In terms of biological role, one of the essential components for the initiation of protein synthesis. Protects formylmethionyl-tRNA from spontaneous hydrolysis and promotes its binding to the 30S ribosomal subunits. Also involved in the hydrolysis of GTP during the formation of the 70S ribosomal complex. The sequence is that of Translation initiation factor IF-2 (infB) from Bacillus subtilis (strain 168).